The primary structure comprises 362 residues: Peptide chain release factor 1 (362 aa).

The residue at position 237 (Gln237) is an N5-methylglutamine.

This sequence belongs to the prokaryotic/mitochondrial release factor family. Methylated by PrmC. Methylation increases the termination efficiency of RF1.

The protein resides in the cytoplasm. Peptide chain release factor 1 directs the termination of translation in response to the peptide chain termination codons UAG and UAA. This Vibrio atlanticus (strain LGP32) (Vibrio splendidus (strain Mel32)) protein is Peptide chain release factor 1.